The primary structure comprises 178 residues: Ribulose bisphosphate carboxylase small subunit, chloroplastic (178 aa).

Residues 1-54 constitute a chloroplast transit peptide; sequence MALISSAAVTTINRAPVQANLATPFTGLKSSAGFPVTKKNNDITSITSNGSRVN.

Belongs to the RuBisCO small chain family. In terms of assembly, heterohexadecamer of 8 large and 8 small subunits.

It is found in the plastid. The protein resides in the chloroplast. Its function is as follows. RuBisCO catalyzes two reactions: the carboxylation of D-ribulose 1,5-bisphosphate, the primary event in carbon dioxide fixation, as well as the oxidative fragmentation of the pentose substrate. Both reactions occur simultaneously and in competition at the same active site. Although the small subunit is not catalytic it is essential for maximal activity. This chain is Ribulose bisphosphate carboxylase small subunit, chloroplastic, found in Trifolium repens (Creeping white clover).